A 391-amino-acid polypeptide reads, in one-letter code: Lipid-A-disaccharide synthase (391 aa).

This sequence belongs to the LpxB family.

The catalysed reaction is a lipid X + a UDP-2-N,3-O-bis[(3R)-3-hydroxyacyl]-alpha-D-glucosamine = a lipid A disaccharide + UDP + H(+). The protein operates within bacterial outer membrane biogenesis; LPS lipid A biosynthesis. Its function is as follows. Condensation of UDP-2,3-diacylglucosamine and 2,3-diacylglucosamine-1-phosphate to form lipid A disaccharide, a precursor of lipid A, a phosphorylated glycolipid that anchors the lipopolysaccharide to the outer membrane of the cell. This Azoarcus sp. (strain BH72) protein is Lipid-A-disaccharide synthase.